An 834-amino-acid polypeptide reads, in one-letter code: Ras GTPase-activating protein 3 (834 aa).

C2 domains are found at residues 1–112 and 123–263; these read MAVE…DTWF and VQGK…EAWY. An N-acetylalanine modification is found at alanine 2. Tyrosine 66 is modified (phosphotyrosine). Serine 77 is modified (phosphoserine). Threonine 110 is subject to Phosphothreonine. One can recognise a Ras-GAP domain in the interval 346 to 561; that stretch reads GRVVPFISAI…DAVKNFLDLI (216 aa). One can recognise a PH domain in the interval 576-677; the sequence is ILLKEGFMIK…WIDILTKVSQ (102 aa). The segment at 679–715 adopts a Btk-type zinc-finger fold; the sequence is NQKRLTVFHPSAYLNGHWLCCRASSDTAIGCTPCTGG. 4 residues coordinate Zn(2+): histidine 687, cysteine 698, cysteine 699, and cysteine 709. Residues serine 809 and serine 833 each carry the phosphoserine modification.

Functionally, inhibitory regulator of the Ras-cyclic AMP pathway. Binds inositol tetrakisphosphate (IP4). The sequence is that of Ras GTPase-activating protein 3 (Rasa3) from Rattus norvegicus (Rat).